The sequence spans 1161 residues: Type IV pilus biogenesis factor PilY1 (1161 aa).

A signal peptide spans 1–30; that stretch reads MKSVLHQIGKTSLAAALSGAVLLSAQTTHA. Ca(2+) contacts are provided by Asp598, Asp600, Asn602, and Asp606. The tract at residues 617–619 is integrin-binding motif RGD; that stretch reads RGD. Positions 849, 851, 853, 855, and 857 each coordinate Ca(2+). The interval 1136-1161 is disordered; sequence SGECLTVNPGPNTRGRQNWRPIEGKN.

Belongs to the PilY1 family. Interacts (via C-terminus) with host integrins alpha-V/beta-3 (ITGAV/ITGB3) and alpha-V/beta-5 (ITGAV/ITGB5).

It is found in the fimbrium. It localises to the membrane. The protein localises to the cytoplasm. The protein resides in the cytosol. In terms of biological role, involved in pilus assembly, twitching motility and adhesion to host cells. Primes type IV pili (T4P) assembly and is required for inclusion of minor pilins PilV, PilW and PilX to the surface pili. Stabilizes assembled pilus fibers likely by antagonizing retraction mediated by PilT. Calcium-binding and calcium release by PilY1 seem to be essential for twitching motility and for regulation of pilus retraction dynamics of PilT. In Pseudomonas aeruginosa (strain ATCC 15692 / DSM 22644 / CIP 104116 / JCM 14847 / LMG 12228 / 1C / PRS 101 / PAO1), this protein is Type IV pilus biogenesis factor PilY1.